A 1018-amino-acid chain; its full sequence is Contactin-1 (1018 aa).

The first 20 residues, 1-20, serve as a signal peptide directing secretion; it reads MKMWLLFSLLVIISFKTCLS. Ig-like C2-type domains follow at residues 41-131, 137-223, 241-326, 331-407, 413-500, and 504-601; these read PIFE…ATLS, PFPP…KSVF, PADI…ARIY, PEWV…AELK, PTFE…GTLV, and PTRI…LVVR. Disulfide bonds link C65-C114 and C158-C211. Residues N208 and N258 are each glycosylated (N-linked (GlcNAc...) asparagine). A disulfide bridge connects residues C263 and C310. N-linked (GlcNAc...) asparagine glycosylation is present at N338. 2 disulfides stabilise this stretch: C352–C391 and C436–C484. N457, N473, N494, and N521 each carry an N-linked (GlcNAc...) asparagine glycan. C526 and C583 are oxidised to a cystine. N-linked (GlcNAc...) asparagine glycosylation is present at N591. 4 Fibronectin type-III domains span residues 606–704, 709–806, 811–906, and 907–1000; these read PPGG…TDGA, APSD…SAQD, APTA…APPS, and QPPR…ILSP. Disordered regions lie at residues 698–718 and 891–910; these read KIKT…GGGG and PPSD…QPPR. The GPI-anchor amidated serine moiety is linked to residue S999. A propeptide spans 1000–1018 (removed in mature form); sequence PCLLGFLLPALGILVYLEF.

This sequence belongs to the immunoglobulin superfamily. Contactin family. As to quaternary structure, monomer. Interacts with CNTNAP1 in cis form. Binds to the carbonic-anhydrase like domain of PTPRZ1. Interacts with NOTCH1 and TNR. Detected in a complex with NRCAM and PTPRB. Interacts with TASOR.

It localises to the cell membrane. In terms of biological role, contactins mediate cell surface interactions during nervous system development. Involved in the formation of paranodal axo-glial junctions in myelinated peripheral nerves and in the signaling between axons and myelinating glial cells via its association with CNTNAP1. Participates in oligodendrocytes generation by acting as a ligand of NOTCH1. Its association with NOTCH1 promotes NOTCH1 activation through the released notch intracellular domain (NICD) and subsequent translocation to the nucleus. Interaction with TNR induces a repulsion of neurons and an inhibition of neurite outgrowth. The chain is Contactin-1 (CNTN1) from Bos taurus (Bovine).